Reading from the N-terminus, the 881-residue chain is DNA mismatch repair protein MutS (881 aa).

Position 605–612 (605–612 (GPNMSGKS)) interacts with ATP.

This sequence belongs to the DNA mismatch repair MutS family.

This protein is involved in the repair of mismatches in DNA. It is possible that it carries out the mismatch recognition step. This protein has a weak ATPase activity. This is DNA mismatch repair protein MutS from Limosilactobacillus reuteri subsp. reuteri (strain JCM 1112) (Lactobacillus reuteri).